We begin with the raw amino-acid sequence, 124 residues long: Putative membrane protein insertion efficiency factor (124 aa).

Residues 1–12 are compositionally biased toward basic and acidic residues; it reads MCPQPHADHAIT. The interval 1 to 26 is disordered; it reads MCPQPHADHAITRGDTGAAGGRNWSG.

The protein belongs to the UPF0161 family.

The protein localises to the cell inner membrane. Its function is as follows. Could be involved in insertion of integral membrane proteins into the membrane. This chain is Putative membrane protein insertion efficiency factor, found in Rhizobium meliloti (strain 1021) (Ensifer meliloti).